Reading from the N-terminus, the 450-residue chain is FAD-linked oxidoreductase ptmO (450 aa).

The FAD-binding PCMH-type domain maps to 32–203 (PPELPYAIVR…TRFFIRTRPA (172 aa)).

The protein belongs to the oxygen-dependent FAD-linked oxidoreductase family. Requires FAD as cofactor.

It participates in secondary metabolite biosynthesis. Its function is as follows. FAD-linked oxidoreductase; part of the gene cluster that mediates the biosynthesis of the indole diterpenes penitrems. The geranylgeranyl diphosphate (GGPP) synthase ptmG catalyzes the first step in penitrem biosynthesis via conversion of farnesyl pyrophosphate and isopentyl pyrophosphate into geranylgeranyl pyrophosphate (GGPP). Condensation of indole-3-glycerol phosphate with GGPP by the prenyl transferase ptmC then forms 3-geranylgeranylindole (3-GGI). Epoxidation by the FAD-dependent monooxygenase ptmM leads to a epoxidized-GGI that is substrate of the terpene cyclase ptmB for cyclization to yield paspaline. Paspaline is subsequently converted to 13-desoxypaxilline by the cytochrome P450 monooxygenase ptmP, the latter being then converted to paxilline by the cytochrome P450 monooxygenase ptmQ. Paxilline is converted to beta-paxitriol via C-10 ketoreduction by the short-chain dehydrogenase ptmH which can be monoprenylated at the C-20 by the indole diterpene prenyltransferase ptmD. A two-step elimination (acetylation and elimination) process performed by the O-acetyltransferase ptmV and ptmI leads to the production of the prenylated form of penijanthine. The FAD-linked oxidoreductase ptmO then converts the prenylated form of penijanthine into PC-M5 which is in turn transformed into PC-M4 by the aromatic dimethylallyltransferase ptmE. Five sequential oxidative transformations performed by the cytochrome P450 monooxygenases ptmK, ptmU, ptmL, ptmN and ptmJ yield the various penitrem compounds. PtmK, ptmU and ptmM are involved in the formation of the key bicyclic ring of penitrem C via the formation of the intermediates secopenitrem D and penitrem D. PtmL catalyzes the epoxidation of penitrem D and C to yield penitrem B and F, respectively. PtmJ catalyzes the last benzylic hydroxylation to convert penitrem B to prenitrem E and penitrem F to penitrem A. This is FAD-linked oxidoreductase ptmO from Penicillium ochrochloron.